Consider the following 341-residue polypeptide: MLSRISSVRIGTQVRQLANPVVNQSSQVLQTRQFYVAAALTVGSMIFGKQNKLADSIANGEVHDKTVDYEARHQEALEKRLKTLTDTRPMKPRYEGHIPLNLHEKLLLFVISGIRSYYHPENGVNIVQLGEATALPFILEDLKKTMLSDETGRRILREKPNVRTETLDMDKLSKMPKNTFGYTFYSWLKKEGVSPDTRAPVKYIDDPDHAFIFKRYRQCHDFYHSLNDLPIIIEGEIAVKALEAANMGIPMAALGTLLAPLRLKSAQRQRLYEIYLPWAIRTGLSCKPLINVYWEELLDKDVNELRKELGITPPPDLRKIRKERAALRKKFKMKYESYEKQ.

A mitochondrion-targeting transit peptide spans 1–16 (MLSRISSVRIGTQVRQ). Positions 220, 221, 224, and 236 each coordinate Zn(2+).

The protein belongs to the COQ4 family. Component of a multi-subunit COQ enzyme complex, composed of at least COQ3, COQ4, COQ5, COQ6, COQ7 and COQ9. It depends on Zn(2+) as a cofactor.

The protein resides in the mitochondrion inner membrane. The catalysed reaction is a 4-hydroxy-3-methoxy-5-(all-trans-polyprenyl)benzoate + H(+) = a 2-methoxy-6-(all-trans-polyprenyl)phenol + CO2. The protein operates within cofactor biosynthesis; ubiquinone biosynthesis. Functionally, lyase that catalyzes the C1-decarboxylation of 4-hydroxy-3-methoxy-5-(all-trans-polyprenyl)benzoic acid into 2-methoxy-6-(all-trans-polyprenyl)phenol during ubiquinone biosynthesis. This is Ubiquinone biosynthesis protein COQ4, mitochondrial from Vanderwaltozyma polyspora (strain ATCC 22028 / DSM 70294 / BCRC 21397 / CBS 2163 / NBRC 10782 / NRRL Y-8283 / UCD 57-17) (Kluyveromyces polysporus).